The chain runs to 93 residues: DNA-directed RNA polymerase subunit omega (93 aa).

It belongs to the RNA polymerase subunit omega family. The RNAP catalytic core consists of 2 alpha, 1 beta, 1 beta' and 1 omega subunit. When a sigma factor is associated with the core the holoenzyme is formed, which can initiate transcription.

The catalysed reaction is RNA(n) + a ribonucleoside 5'-triphosphate = RNA(n+1) + diphosphate. Promotes RNA polymerase assembly. Latches the N- and C-terminal regions of the beta' subunit thereby facilitating its interaction with the beta and alpha subunits. This is DNA-directed RNA polymerase subunit omega from Shewanella loihica (strain ATCC BAA-1088 / PV-4).